The primary structure comprises 332 residues: 2,3-diketo-L-gulonate reductase (332 aa).

The Proton donor role is filled by H44. NAD(+) is bound by residues I168–S174, W224–K225, and G304–E306.

This sequence belongs to the LDH2/MDH2 oxidoreductase family. DlgD subfamily. In terms of assembly, homodimer.

It is found in the cytoplasm. The catalysed reaction is 3-dehydro-L-gulonate + NAD(+) = 2,3-dioxo-L-gulonate + NADH + H(+). The enzyme catalyses 3-dehydro-L-gulonate + NADP(+) = 2,3-dioxo-L-gulonate + NADPH + H(+). Functionally, catalyzes the reduction of 2,3-diketo-L-gulonate in the presence of NADH, to form 3-keto-L-gulonate. This is 2,3-diketo-L-gulonate reductase from Klebsiella pneumoniae (strain 342).